A 252-amino-acid polypeptide reads, in one-letter code: 3-deoxy-manno-octulosonate cytidylyltransferase (252 aa).

The protein belongs to the KdsB family.

Its subcellular location is the cytoplasm. It catalyses the reaction 3-deoxy-alpha-D-manno-oct-2-ulosonate + CTP = CMP-3-deoxy-beta-D-manno-octulosonate + diphosphate. It functions in the pathway nucleotide-sugar biosynthesis; CMP-3-deoxy-D-manno-octulosonate biosynthesis; CMP-3-deoxy-D-manno-octulosonate from 3-deoxy-D-manno-octulosonate and CTP: step 1/1. It participates in bacterial outer membrane biogenesis; lipopolysaccharide biosynthesis. Activates KDO (a required 8-carbon sugar) for incorporation into bacterial lipopolysaccharide in Gram-negative bacteria. The polypeptide is 3-deoxy-manno-octulosonate cytidylyltransferase (Trichlorobacter lovleyi (strain ATCC BAA-1151 / DSM 17278 / SZ) (Geobacter lovleyi)).